A 49-amino-acid polypeptide reads, in one-letter code: uncharacterized protein (49 aa).

A helical membrane pass occupies residues 22 to 42 (AIVGISIMIIIAIGIYLIIEY).

The protein localises to the membrane. This is an uncharacterized protein from Methanocaldococcus jannaschii (strain ATCC 43067 / DSM 2661 / JAL-1 / JCM 10045 / NBRC 100440) (Methanococcus jannaschii).